The sequence spans 440 residues: WAS/WASL-interacting protein family member 2 (440 aa).

Pro residues predominate over residues 1–18 (MPIPPPPPPPPGPPPPPT). The interval 1–38 (MPIPPPPPPPPGPPPPPTFNQANTEQPKLSRDEQRNRG) is disordered. The WH2 domain maps to 36–53 (NRGALLQDICKGTKLKKV). Residue R37 is modified to Asymmetric dimethylarginine. The tract at residues 49-52 (KLKK) is binds actin. Disordered regions lie at residues 56 to 386 (VNDR…RDSI) and 419 to 440 (RVYP…PILR). The span at 116-132 (PSSRAAAPRPPGSAASG) shows a compositional bias: low complexity. 4 stretches are compositionally biased toward pro residues: residues 176–193 (APPP…PTPL), 225–236 (PAPPPVKPPPSP), 249–262 (APPP…PGVP), and 356–378 (RGKP…PPPL).

The protein belongs to the verprolin family. As to quaternary structure, interacts with WASL and WASP, and this interaction results in cytoplasmic relocation of these two proteins along actin filaments. Interacts with NCK2 resulting in the localization to sites of focal adhesions.

It is found in the cytoplasm. The protein localises to the cytoskeleton. Plays an active role in the formation of cell surface protrusions downstream of activated PDGFB receptors. Plays an important role in actin-microspike formation through cooperation with WASL. May cooperate with WASP and WASL to induce mobilization and reorganization of the actin filament system. This Mus musculus (Mouse) protein is WAS/WASL-interacting protein family member 2 (Wipf2).